Reading from the N-terminus, the 244-residue chain is tRNA pseudouridine synthase A (244 aa).

The Nucleophile role is filled by Asp52. Tyr110 is a binding site for substrate.

This sequence belongs to the tRNA pseudouridine synthase TruA family. Homodimer.

It catalyses the reaction uridine(38/39/40) in tRNA = pseudouridine(38/39/40) in tRNA. Functionally, formation of pseudouridine at positions 38, 39 and 40 in the anticodon stem and loop of transfer RNAs. In Brevibacillus brevis (strain 47 / JCM 6285 / NBRC 100599), this protein is tRNA pseudouridine synthase A.